The chain runs to 355 residues: NADH-quinone oxidoreductase subunit H (355 aa).

Helical transmembrane passes span 25 to 45, 91 to 111, 126 to 146, 170 to 190, 205 to 225, 253 to 273, 290 to 310, and 330 to 350; these read VVRILVVSVVILLCVAYLILW, WLYLIAPIMTVVPAFAVWAVI, LLYAMAISSIGVYAVILAGWA, MGFALVLVLMTAGSLNLSEIV, FLSWNWLPLLPAFVVYFISGI, MAFALFFLAEYINMIVISALA, FIPGIFWLVLKVFALLSVFIW, and VFLPVTVIWVVVVGCWMMSPL.

Belongs to the complex I subunit 1 family. NDH-1 is composed of 14 different subunits. Subunits NuoA, H, J, K, L, M, N constitute the membrane sector of the complex.

It localises to the cell inner membrane. The catalysed reaction is a quinone + NADH + 5 H(+)(in) = a quinol + NAD(+) + 4 H(+)(out). NDH-1 shuttles electrons from NADH, via FMN and iron-sulfur (Fe-S) centers, to quinones in the respiratory chain. The immediate electron acceptor for the enzyme in this species is believed to be ubiquinone. Couples the redox reaction to proton translocation (for every two electrons transferred, four hydrogen ions are translocated across the cytoplasmic membrane), and thus conserves the redox energy in a proton gradient. This subunit may bind ubiquinone. The chain is NADH-quinone oxidoreductase subunit H from Burkholderia cenocepacia (strain ATCC BAA-245 / DSM 16553 / LMG 16656 / NCTC 13227 / J2315 / CF5610) (Burkholderia cepacia (strain J2315)).